Consider the following 887-residue polypeptide: Phosphatidylinositol 3-kinase catalytic subunit type 3 (887 aa).

The C2 PI3K-type domain occupies 35 to 184 (YKAVLEDPML…LAKLTKAHRQ (150 aa)). The interval 149–170 (VEADGSEPTRTPGRTSSTLSED) is disordered. Residues 156–170 (PTRTPGRTSSTLSED) show a composition bias toward polar residues. Threonine 163 is modified (phosphothreonine; by AMPK). Serine 165 carries the phosphoserine; by AMPK modification. Serine 244, serine 261, and serine 282 each carry phosphoserine. Positions 283-520 (DHDLKPNATT…PKTHEMYLNV (238 aa)) constitute a PIK helical domain. The interval 415–466 (LEPTKKDSQTSASESLSNSGVSSGDIDSSQIITNPLPPVASPPPASKAKEVS) is disordered. The span at 425–437 (SASESLSNSGVSS) shows a compositional bias: low complexity. The segment covering 449 to 459 (PLPPVASPPPA) has biased composition (pro residues). The region spanning 605–871 (IPETATLFKS…LIDESVHALF (267 aa)) is the PI3K/PI4K catalytic domain. A G-loop region spans residues 611–617 (LFKSALM). The interval 740–748 (GVGDRHLDN) is catalytic loop. The segment at 759 to 780 (HIDFGYILGRDPKPLPPPMKLN) is activation loop.

It belongs to the PI3/PI4-kinase family. Component of the PI3K (PI3KC3/PI3K-III/class III phosphatidylinositol 3-kinase) complex the core of which is composed of the catalytic subunit PIK3C3, the regulatory subunit PIK3R4 and BECN1 associating with additional regulatory/auxiliary subunits to form alternative complex forms. Alternative complex forms containing a fourth regulatory subunit in a mutually exclusive manner are: the PI3K complex I (PI3KC3-C1) containing ATG14, and the PI3K complex II (PI3KC3-C2) containing UVRAG. PI3KC3-C1 displays a V-shaped architecture with PIK3R4 serving as a bridge between PIK3C3 and the ATG14:BECN1 subcomplex. Both, PI3KC3-C1 and PI3KC3-C2, can associate with further regulatory subunits such as RUBCN, SH3GLB1/Bif-1 and AMBRA1. PI3KC3-C1 probably associates with PIK3CB. Interacts with RAB7A in the presence of PIK3R4. Interacts with AMBRA1. Interacts with BECN1P1/BECN2. Interacts with SLAMF1. May be a component of a complex composed of RAB5A (in GDP-bound form), DYN2 and PIK3C3. Interacts with NCKAP1L. Interacts with ATG14; this interaction is increased in the absence of TMEM39A. Interacts with STEEP1; the interaction is STING1-dependent and required for trafficking of STING1 from the endoplasmic reticulum. Interacts with YWHAG. Interacts with ARMC3. Mn(2+) is required as a cofactor. Ubiquitinated via 'Lys-29'- and 'Lys-48'-linked ubiquitination by UBE3C, promoting its degradation. Deubiquitination by ZRANB1/TRABID promotes its stabilization, leading to autophagosome maturation.

It localises to the midbody. Its subcellular location is the late endosome. The protein localises to the cytoplasmic vesicle. It is found in the autophagosome. It carries out the reaction a 1,2-diacyl-sn-glycero-3-phospho-(1D-myo-inositol) + ATP = a 1,2-diacyl-sn-glycero-3-phospho-(1D-myo-inositol-3-phosphate) + ADP + H(+). In terms of biological role, catalytic subunit of the PI3K complex that mediates formation of phosphatidylinositol 3-phosphate; different complex forms are believed to play a role in multiple membrane trafficking pathways: PI3KC3-C1 is involved in initiation of autophagosomes and PI3KC3-C2 in maturation of autophagosomes and endocytosis. As part of PI3KC3-C1, promotes endoplasmic reticulum membrane curvature formation prior to vesicle budding. Involved in regulation of degradative endocytic trafficking and required for the abscission step in cytokinesis, probably in the context of PI3KC3-C2. Involved in the transport of lysosomal enzyme precursors to lysosomes. Required for transport from early to late endosomes. This is Phosphatidylinositol 3-kinase catalytic subunit type 3 from Mus musculus (Mouse).